A 155-amino-acid polypeptide reads, in one-letter code: Endoribonuclease YbeY (155 aa).

Residues H114, H118, and H124 each contribute to the Zn(2+) site.

It belongs to the endoribonuclease YbeY family. The cofactor is Zn(2+).

It localises to the cytoplasm. Single strand-specific metallo-endoribonuclease involved in late-stage 70S ribosome quality control and in maturation of the 3' terminus of the 16S rRNA. This Tolumonas auensis (strain DSM 9187 / NBRC 110442 / TA 4) protein is Endoribonuclease YbeY.